The sequence spans 381 residues: ADP,ATP carrier protein 1, mitochondrial (381 aa).

Residues Met1–Gln70 constitute a mitochondrion transit peptide. Solcar repeat units lie at residues Thr78–Leu171, Lys183–Val276, and Asp284–Ile370. Transmembrane regions (helical) follow at residues Phe80–Leu107, Thr148–Phe172, Tyr181–Leu201, Phe252–Val273, and Phe287–Ile307. 2 residues coordinate ADP: Arg153 and Lys165. Arg311 provides a ligand contact to ADP. The important for transport activity stretch occupies residues Arg311–Met316. Residues Arg311–Met316 carry the Nucleotide carrier signature motif motif. A helical transmembrane segment spans residues Ala347–Leu367.

The protein belongs to the mitochondrial carrier (TC 2.A.29) family. As to quaternary structure, monomer.

Its subcellular location is the mitochondrion inner membrane. It catalyses the reaction ADP(in) + ATP(out) = ADP(out) + ATP(in). With respect to regulation, the matrix-open state (m-state) is inhibited by the membrane-permeable bongkrekic acid (BKA). The cytoplasmic-open state (c-state) is inhibited by the membrane-impermeable toxic inhibitor carboxyatractyloside (CATR). Its function is as follows. ADP:ATP antiporter that mediates import of ADP into the mitochondrial matrix for ATP synthesis, and export of ATP out to fuel the cell. Cycles between the cytoplasmic-open state (c-state) and the matrix-open state (m-state): operates by the alternating access mechanism with a single substrate-binding site intermittently exposed to either the cytosolic (c-state) or matrix (m-state) side of the inner mitochondrial membrane. The sequence is that of ADP,ATP carrier protein 1, mitochondrial (AAC1) from Arabidopsis thaliana (Mouse-ear cress).